A 474-amino-acid polypeptide reads, in one-letter code: Aspartyl/glutamyl-tRNA(Asn/Gln) amidotransferase subunit B (474 aa).

This sequence belongs to the GatB/GatE family. GatB subfamily. In terms of assembly, heterotrimer of A, B and C subunits.

It catalyses the reaction L-glutamyl-tRNA(Gln) + L-glutamine + ATP + H2O = L-glutaminyl-tRNA(Gln) + L-glutamate + ADP + phosphate + H(+). The enzyme catalyses L-aspartyl-tRNA(Asn) + L-glutamine + ATP + H2O = L-asparaginyl-tRNA(Asn) + L-glutamate + ADP + phosphate + 2 H(+). Its function is as follows. Allows the formation of correctly charged Asn-tRNA(Asn) or Gln-tRNA(Gln) through the transamidation of misacylated Asp-tRNA(Asn) or Glu-tRNA(Gln) in organisms which lack either or both of asparaginyl-tRNA or glutaminyl-tRNA synthetases. The reaction takes place in the presence of glutamine and ATP through an activated phospho-Asp-tRNA(Asn) or phospho-Glu-tRNA(Gln). In Helicobacter hepaticus (strain ATCC 51449 / 3B1), this protein is Aspartyl/glutamyl-tRNA(Asn/Gln) amidotransferase subunit B.